Reading from the N-terminus, the 233-residue chain is Large ribosomal subunit protein uL1 (233 aa).

Belongs to the universal ribosomal protein uL1 family. Part of the 50S ribosomal subunit.

Functionally, binds directly to 23S rRNA. The L1 stalk is quite mobile in the ribosome, and is involved in E site tRNA release. Protein L1 is also a translational repressor protein, it controls the translation of the L11 operon by binding to its mRNA. This is Large ribosomal subunit protein uL1 from Brucella suis (strain ATCC 23445 / NCTC 10510).